A 284-amino-acid chain; its full sequence is GPN-loop GTPase 3 (284 aa).

13-18 lines the GTP pocket; it reads GSGKST. The Gly-Pro-Asn (GPN)-loop; involved in dimer interface motif lies at 72-74; it reads GPN. 174–177 is a binding site for GTP; it reads TKMD.

Belongs to the GPN-loop GTPase family. In terms of assembly, heterodimer with GPN1. Binds to RNA polymerase II (RNAPII). Interacts directly with subunits RPB4 and RPB7 and the CTD of RPB1.

In terms of biological role, small GTPase required for proper localization of RNA polymerase II (RNAPII). May act at an RNAP assembly step prior to nuclear import. The protein is GPN-loop GTPase 3 of Homo sapiens (Human).